Here is a 275-residue protein sequence, read N- to C-terminus: Formamidopyrimidine-DNA glycosylase (275 aa).

The active-site Schiff-base intermediate with DNA is P2. E3 acts as the Proton donor in catalysis. K59 acts as the Proton donor; for beta-elimination activity in catalysis. DNA contacts are provided by H94 and R113. The FPG-type zinc finger occupies 241–275; sequence LVHTHAKEPCQICGTIIQKTKVNGRGTYYCPNCQN. Catalysis depends on R265, which acts as the Proton donor; for delta-elimination activity.

This sequence belongs to the FPG family. Monomer. Zn(2+) serves as cofactor.

It carries out the reaction Hydrolysis of DNA containing ring-opened 7-methylguanine residues, releasing 2,6-diamino-4-hydroxy-5-(N-methyl)formamidopyrimidine.. The catalysed reaction is 2'-deoxyribonucleotide-(2'-deoxyribose 5'-phosphate)-2'-deoxyribonucleotide-DNA = a 3'-end 2'-deoxyribonucleotide-(2,3-dehydro-2,3-deoxyribose 5'-phosphate)-DNA + a 5'-end 5'-phospho-2'-deoxyribonucleoside-DNA + H(+). Involved in base excision repair of DNA damaged by oxidation or by mutagenic agents. Acts as a DNA glycosylase that recognizes and removes damaged bases. Has a preference for oxidized purines, such as 7,8-dihydro-8-oxoguanine (8-oxoG). Has AP (apurinic/apyrimidinic) lyase activity and introduces nicks in the DNA strand. Cleaves the DNA backbone by beta-delta elimination to generate a single-strand break at the site of the removed base with both 3'- and 5'-phosphates. The chain is Formamidopyrimidine-DNA glycosylase from Ureaplasma parvum serovar 3 (strain ATCC 700970).